A 357-amino-acid polypeptide reads, in one-letter code: Sulfate/thiosulfate import ATP-binding protein CysA (357 aa).

One can recognise an ABC transporter domain in the interval 3-237; the sequence is ITIQNLNKHF…PENAFVTEFL (235 aa). 35 to 42 is an ATP binding site; sequence GPSGCGKT.

Belongs to the ABC transporter superfamily. Sulfate/tungstate importer (TC 3.A.1.6) family. As to quaternary structure, the complex is composed of two ATP-binding proteins (CysA), two transmembrane proteins (CysT and CysW) and a solute-binding protein (CysP).

The protein localises to the cell inner membrane. The enzyme catalyses sulfate(out) + ATP + H2O = sulfate(in) + ADP + phosphate + H(+). It carries out the reaction thiosulfate(out) + ATP + H2O = thiosulfate(in) + ADP + phosphate + H(+). Functionally, part of the ABC transporter complex CysAWTP involved in sulfate/thiosulfate import. Responsible for energy coupling to the transport system. This chain is Sulfate/thiosulfate import ATP-binding protein CysA, found in Neisseria meningitidis serogroup A / serotype 4A (strain DSM 15465 / Z2491).